We begin with the raw amino-acid sequence, 103 residues long: Large ribosomal subunit protein bL21 (103 aa).

Belongs to the bacterial ribosomal protein bL21 family. As to quaternary structure, part of the 50S ribosomal subunit. Contacts protein L20.

Functionally, this protein binds to 23S rRNA in the presence of protein L20. The chain is Large ribosomal subunit protein bL21 from Mycolicibacterium smegmatis (strain ATCC 700084 / mc(2)155) (Mycobacterium smegmatis).